The primary structure comprises 395 residues: Elongation factor Tu (395 aa).

A tr-type G domain is found at 10 to 204 (KPHVNVGTIG…AVDEYIPEPV (195 aa)). The segment at 19–26 (GHVDHGKT) is G1. A GTP-binding site is contributed by 19 to 26 (GHVDHGKT). Threonine 26 serves as a coordination point for Mg(2+). Positions 60 to 64 (GITIA) are G2. A G3 region spans residues 81–84 (DCPG). GTP is bound by residues 81–85 (DCPGH) and 136–139 (NKVD). A G4 region spans residues 136–139 (NKVD). A G5 region spans residues 174-176 (SAL).

This sequence belongs to the TRAFAC class translation factor GTPase superfamily. Classic translation factor GTPase family. EF-Tu/EF-1A subfamily. In terms of assembly, monomer.

It localises to the cytoplasm. The catalysed reaction is GTP + H2O = GDP + phosphate + H(+). Its function is as follows. GTP hydrolase that promotes the GTP-dependent binding of aminoacyl-tRNA to the A-site of ribosomes during protein biosynthesis. This is Elongation factor Tu from Exiguobacterium sp. (strain ATCC BAA-1283 / AT1b).